The primary structure comprises 255 residues: Post-GPI attachment to proteins factor 2 (255 aa).

6 helical membrane-spanning segments follow: residues leucine 25–phenylalanine 45, leucine 80–tyrosine 100, leucine 111–phenylalanine 131, asparagine 143–asparagine 163, leucine 185–alanine 205, and alanine 209–phenylalanine 229.

The protein belongs to the PGAP2 family.

Its subcellular location is the golgi apparatus membrane. It is found in the endoplasmic reticulum membrane. Its function is as follows. Involved in the lipid remodeling steps of GPI-anchor maturation. Required for stable expression of GPI-anchored proteins at the cell surface. This Drosophila pseudoobscura pseudoobscura (Fruit fly) protein is Post-GPI attachment to proteins factor 2.